Consider the following 270-residue polypeptide: Putative phosphoenolpyruvate synthase regulatory protein (270 aa).

150–157 (GVSRCGKT) serves as a coordination point for ADP.

Belongs to the pyruvate, phosphate/water dikinase regulatory protein family. PSRP subfamily.

It catalyses the reaction [pyruvate, water dikinase] + ADP = [pyruvate, water dikinase]-phosphate + AMP + H(+). The enzyme catalyses [pyruvate, water dikinase]-phosphate + phosphate + H(+) = [pyruvate, water dikinase] + diphosphate. In terms of biological role, bifunctional serine/threonine kinase and phosphorylase involved in the regulation of the phosphoenolpyruvate synthase (PEPS) by catalyzing its phosphorylation/dephosphorylation. The protein is Putative phosphoenolpyruvate synthase regulatory protein of Shewanella piezotolerans (strain WP3 / JCM 13877).